A 129-amino-acid polypeptide reads, in one-letter code: MVNDCISDLLTRIRNANLVKKEKLIIPNTRVSRNICALLEKEGFIDSCQVNSTEELALQLKYKGRERKPCITNLRRISKPGLRIYASYKNIPKILNGMGVVFVSTSQGLMTDREARYRKLGGEIVCSVW.

The protein belongs to the universal ribosomal protein uS8 family. As to quaternary structure, part of the 30S ribosomal subunit.

It localises to the plastid. The protein resides in the chloroplast. Functionally, one of the primary rRNA binding proteins, it binds directly to 16S rRNA central domain where it helps coordinate assembly of the platform of the 30S subunit. The protein is Small ribosomal subunit protein uS8c (rps8) of Oltmannsiellopsis viridis (Marine flagellate).